Consider the following 456-residue polypeptide: Bifunctional protein GlmU (456 aa).

The interval 1–229 is pyrophosphorylase; the sequence is MLNNAMSVVI…LSEVEGVNNR (229 aa). UDP-N-acetyl-alpha-D-glucosamine contacts are provided by residues 11 to 14, Lys-25, Gln-76, 81 to 82, 103 to 105, Gly-140, Glu-154, Asn-169, and Asn-227; these read LAAG, GT, and YGD. Position 105 (Asp-105) interacts with Mg(2+). Asn-227 provides a ligand contact to Mg(2+). The interval 230–250 is linker; sequence LQLSRLERVYQSEQAEKLLLA. The segment at 251 to 456 is N-acetyltransferase; that stretch reads GVMLRDPARF…EGWRRPVKKK (206 aa). UDP-N-acetyl-alpha-D-glucosamine is bound by residues Arg-333 and Lys-351. The Proton acceptor role is filled by His-363. Residues Tyr-366 and Asn-377 each coordinate UDP-N-acetyl-alpha-D-glucosamine. Acetyl-CoA contacts are provided by residues Ala-380, 386–387, Ser-405, Ala-423, and Arg-440; that span reads NY.

In the N-terminal section; belongs to the N-acetylglucosamine-1-phosphate uridyltransferase family. This sequence in the C-terminal section; belongs to the transferase hexapeptide repeat family. As to quaternary structure, homotrimer. The cofactor is Mg(2+).

It localises to the cytoplasm. It carries out the reaction alpha-D-glucosamine 1-phosphate + acetyl-CoA = N-acetyl-alpha-D-glucosamine 1-phosphate + CoA + H(+). The enzyme catalyses N-acetyl-alpha-D-glucosamine 1-phosphate + UTP + H(+) = UDP-N-acetyl-alpha-D-glucosamine + diphosphate. The protein operates within nucleotide-sugar biosynthesis; UDP-N-acetyl-alpha-D-glucosamine biosynthesis; N-acetyl-alpha-D-glucosamine 1-phosphate from alpha-D-glucosamine 6-phosphate (route II): step 2/2. It participates in nucleotide-sugar biosynthesis; UDP-N-acetyl-alpha-D-glucosamine biosynthesis; UDP-N-acetyl-alpha-D-glucosamine from N-acetyl-alpha-D-glucosamine 1-phosphate: step 1/1. Its pathway is bacterial outer membrane biogenesis; LPS lipid A biosynthesis. Functionally, catalyzes the last two sequential reactions in the de novo biosynthetic pathway for UDP-N-acetylglucosamine (UDP-GlcNAc). The C-terminal domain catalyzes the transfer of acetyl group from acetyl coenzyme A to glucosamine-1-phosphate (GlcN-1-P) to produce N-acetylglucosamine-1-phosphate (GlcNAc-1-P), which is converted into UDP-GlcNAc by the transfer of uridine 5-monophosphate (from uridine 5-triphosphate), a reaction catalyzed by the N-terminal domain. This chain is Bifunctional protein GlmU, found in Shigella dysenteriae serotype 1 (strain Sd197).